Here is a 278-residue protein sequence, read N- to C-terminus: Bicarbonate transport ATP-binding protein CmpD (278 aa).

One can recognise an ABC transporter domain in the interval Leu21 to Glu254. ATP is bound at residue Gly57–Ser64.

This sequence belongs to the ABC transporter superfamily. Nitrate/nitrite/cyanate uptake transporter (NitT) (TC 3.A.1.16) family. As to quaternary structure, the complex is composed of two ATP-binding proteins (CmpC and CmpD), a transmembrane protein (CmpB) and a solute-binding protein (CmpA).

It localises to the cell inner membrane. Part of the ABC transporter complex CmpABCD involved in bicarbonate transport. Responsible for energy coupling to the transport system. The sequence is that of Bicarbonate transport ATP-binding protein CmpD (cmpD) from Synechococcus elongatus (strain ATCC 33912 / PCC 7942 / FACHB-805) (Anacystis nidulans R2).